Here is an 828-residue protein sequence, read N- to C-terminus: MQNSVSVPPKDEGESNIPSGTIQSRKGLQNKSQFRTIAPKIVPKVLTSRMLPCHSPSRSDQVNLGPSINSKLLGMSTQNYALMQVAGQEGTFSLVALPHVASAQPIQKPRMSLPENLKLPIPRYQPPRNSKASRKKPILIFPKSGCSKAPAQTQMCPQMSPSPPHHPELLYKPSPFEEVPSLEQAPASISTAALTNGSDHGDLRPPVTNTHGSLNPPATPASSTPEEPAKQDLTALSGKAHFVSKITSSKPSAVASEKFKEQVDLAKTMTNLSPTILGNAVQLISSVPKGKLPIPPYSRMKTMEVYKIKSDANIAGFSLPGPKADCDKIPSTTEGFNAATKVASRLPVPQVSQQSACESAFCPPTKLDLNHKTKLNSGAAKRKGRKRKVPDEILAFQGKRRKYIINKCRDGKERVKNDPQEFRDQKLGTLKKYRSIMPKPIMVIPTLASLASPTTLQSQMLGGLGQDVLLNNSLTPKYLGCKQDNSSSPKPSSVFRNGFSGIKKPWHRCHVCNHHFQFKQHLRDHMNTHTNRRPYSCRICRKSYVRPGSLSTHMKLHHGENRLKKLMCCEFCAKVFGHIRVYFGHLKEVHRVVISTEPAPSELQPGDIPKNRDMSVRGMEGSLERENKSNLEEDFLLNQADEVKLQIKCGRCQITAQSFAEIKFHLLDVHGEEIEGRLQEGTFPGSKGTQEELVQHASPDWKRHPERGKPEKVHSSSEESHACPRLKRQLHLHQNGVEMLMENEGPQSGTNKPRETCQGPECPGLHTFLLWSHSGFNCLLCAEMLGRKEDLLHHWKHQHNCEDPSKLWAILNTVSNQGVIELSSEAEK.

Disordered stretches follow at residues 1–29, 143–173, and 193–231; these read MQNSVSVPPKDEGESNIPSGTIQSRKGLQ, KSGCSKAPAQTQMCPQMSPSPPHHPELLYKP, and ALTNGSDHGDLRPPVTNTHGSLNPPATPASSTPEEPAKQ. 2 stretches are compositionally biased toward polar residues: residues 16-29 and 150-159; these read NIPSGTIQSRKGLQ and PAQTQMCPQM. 3 C2H2-type zinc fingers span residues 507–529, 535–557, and 567–590; these read HRCHVCNHHFQFKQHLRDHMNTH, YSCRICRKSYVRPGSLSTHMKLH, and MCCEFCAKVFGHIRVYFGHLKEVH. Positions 680–721 are disordered; sequence EGTFPGSKGTQEELVQHASPDWKRHPERGKPEKVHSSSEESH. Basic and acidic residues predominate over residues 689 to 721; sequence TQEELVQHASPDWKRHPERGKPEKVHSSSEESH. The C2H2-type 4 zinc-finger motif lies at 776–799; that stretch reads FNCLLCAEMLGRKEDLLHHWKHQH.

It belongs to the krueppel C2H2-type zinc-finger protein family. In terms of tissue distribution, ubiquitous.

It localises to the nucleus. Functionally, isoform 1 acts as a transcriptional repressor. The sequence is that of Zinc finger protein 438 (ZNF438) from Homo sapiens (Human).